The following is a 184-amino-acid chain: ATP synthase subunit b, chloroplastic (184 aa).

Residues 27–49 (LATNPINLSVVLGVLIFFGKGVL) form a helical membrane-spanning segment.

The protein belongs to the ATPase B chain family. F-type ATPases have 2 components, F(1) - the catalytic core - and F(0) - the membrane proton channel. F(1) has five subunits: alpha(3), beta(3), gamma(1), delta(1), epsilon(1). F(0) has four main subunits: a(1), b(1), b'(1) and c(10-14). The alpha and beta chains form an alternating ring which encloses part of the gamma chain. F(1) is attached to F(0) by a central stalk formed by the gamma and epsilon chains, while a peripheral stalk is formed by the delta, b and b' chains.

The protein resides in the plastid. The protein localises to the chloroplast thylakoid membrane. In terms of biological role, f(1)F(0) ATP synthase produces ATP from ADP in the presence of a proton or sodium gradient. F-type ATPases consist of two structural domains, F(1) containing the extramembraneous catalytic core and F(0) containing the membrane proton channel, linked together by a central stalk and a peripheral stalk. During catalysis, ATP synthesis in the catalytic domain of F(1) is coupled via a rotary mechanism of the central stalk subunits to proton translocation. Its function is as follows. Component of the F(0) channel, it forms part of the peripheral stalk, linking F(1) to F(0). The sequence is that of ATP synthase subunit b, chloroplastic from Oenothera argillicola (Appalachian evening primrose).